Consider the following 264-residue polypeptide: Thymidylate synthase (264 aa).

Arginine 21 contacts dUMP. Histidine 51 serves as a coordination point for (6R)-5,10-methylene-5,6,7,8-tetrahydrofolate. Residue 126-127 (RR) coordinates dUMP. The active-site Nucleophile is cysteine 146. DUMP is bound by residues 166 to 169 (RSCD), asparagine 177, and 207 to 209 (HLY). Aspartate 169 lines the (6R)-5,10-methylene-5,6,7,8-tetrahydrofolate pocket. Alanine 263 is a (6R)-5,10-methylene-5,6,7,8-tetrahydrofolate binding site.

The protein belongs to the thymidylate synthase family. Bacterial-type ThyA subfamily. In terms of assembly, homodimer.

Its subcellular location is the cytoplasm. The enzyme catalyses dUMP + (6R)-5,10-methylene-5,6,7,8-tetrahydrofolate = 7,8-dihydrofolate + dTMP. The protein operates within pyrimidine metabolism; dTTP biosynthesis. Functionally, catalyzes the reductive methylation of 2'-deoxyuridine-5'-monophosphate (dUMP) to 2'-deoxythymidine-5'-monophosphate (dTMP) while utilizing 5,10-methylenetetrahydrofolate (mTHF) as the methyl donor and reductant in the reaction, yielding dihydrofolate (DHF) as a by-product. This enzymatic reaction provides an intracellular de novo source of dTMP, an essential precursor for DNA biosynthesis. The sequence is that of Thymidylate synthase from Yersinia pseudotuberculosis serotype O:1b (strain IP 31758).